A 479-amino-acid polypeptide reads, in one-letter code: Ribosomal RNA small subunit methyltransferase F (479 aa).

S-adenosyl-L-methionine-binding positions include 125–131, E149, D176, and D194; that span reads AAAPGSK. Residue C247 is the Nucleophile of the active site.

This sequence belongs to the class I-like SAM-binding methyltransferase superfamily. RsmB/NOP family.

The protein localises to the cytoplasm. It carries out the reaction cytidine(1407) in 16S rRNA + S-adenosyl-L-methionine = 5-methylcytidine(1407) in 16S rRNA + S-adenosyl-L-homocysteine + H(+). Functionally, specifically methylates the cytosine at position 1407 (m5C1407) of 16S rRNA. The protein is Ribosomal RNA small subunit methyltransferase F of Escherichia coli O127:H6 (strain E2348/69 / EPEC).